Here is a 328-residue protein sequence, read N- to C-terminus: L-lactate dehydrogenase (328 aa).

NAD(+) contacts are provided by residues Val18, Glu39, Lys46, Tyr71, and 85 to 86; that span reads GA. Substrate is bound by residues Gln88 and Arg94. NAD(+) is bound by residues Ser107, 124–126, and Ser149; that span reads AAN. 126–129 contributes to the substrate binding site; that stretch reads NPVD. Residue 154-157 coordinates substrate; the sequence is DSAR. 2 residues coordinate beta-D-fructose 1,6-bisphosphate: Arg159 and His174. The Proton acceptor role is filled by His181. Tyr226 carries the phosphotyrosine modification. Thr235 serves as a coordination point for substrate.

It belongs to the LDH/MDH superfamily. LDH family. As to quaternary structure, homotetramer.

The protein resides in the cytoplasm. It catalyses the reaction (S)-lactate + NAD(+) = pyruvate + NADH + H(+). It participates in fermentation; pyruvate fermentation to lactate; (S)-lactate from pyruvate: step 1/1. With respect to regulation, allosterically activated by fructose 1,6-bisphosphate (FBP). Functionally, catalyzes the conversion of lactate to pyruvate. This Streptococcus gordonii (strain Challis / ATCC 35105 / BCRC 15272 / CH1 / DL1 / V288) protein is L-lactate dehydrogenase.